The sequence spans 361 residues: Phospho-N-acetylmuramoyl-pentapeptide-transferase (361 aa).

The next 10 helical transmembrane spans lie at Leu-28 to Phe-48, Ile-70 to Leu-90, Leu-94 to Ala-114, Val-129 to Leu-149, Leu-169 to Ser-189, Pro-205 to Phe-225, Met-237 to Phe-257, Ile-264 to Ile-284, Ile-289 to Val-309, and Thr-338 to Leu-358.

This sequence belongs to the glycosyltransferase 4 family. MraY subfamily. Requires Mg(2+) as cofactor.

It localises to the cell inner membrane. The catalysed reaction is UDP-N-acetyl-alpha-D-muramoyl-L-alanyl-gamma-D-glutamyl-meso-2,6-diaminopimeloyl-D-alanyl-D-alanine + di-trans,octa-cis-undecaprenyl phosphate = di-trans,octa-cis-undecaprenyl diphospho-N-acetyl-alpha-D-muramoyl-L-alanyl-D-glutamyl-meso-2,6-diaminopimeloyl-D-alanyl-D-alanine + UMP. Its pathway is cell wall biogenesis; peptidoglycan biosynthesis. Catalyzes the initial step of the lipid cycle reactions in the biosynthesis of the cell wall peptidoglycan: transfers peptidoglycan precursor phospho-MurNAc-pentapeptide from UDP-MurNAc-pentapeptide onto the lipid carrier undecaprenyl phosphate, yielding undecaprenyl-pyrophosphoryl-MurNAc-pentapeptide, known as lipid I. The polypeptide is Phospho-N-acetylmuramoyl-pentapeptide-transferase (Pelagibacter ubique (strain HTCC1062)).